Reading from the N-terminus, the 404-residue chain is Arginine biosynthesis bifunctional protein ArgJ (404 aa).

6 residues coordinate substrate: Thr-166, Lys-189, Thr-200, Glu-280, Asn-399, and Ser-404. The active-site Nucleophile is Thr-200.

It belongs to the ArgJ family. As to quaternary structure, heterotetramer of two alpha and two beta chains.

It is found in the cytoplasm. The enzyme catalyses N(2)-acetyl-L-ornithine + L-glutamate = N-acetyl-L-glutamate + L-ornithine. It carries out the reaction L-glutamate + acetyl-CoA = N-acetyl-L-glutamate + CoA + H(+). It participates in amino-acid biosynthesis; L-arginine biosynthesis; L-ornithine and N-acetyl-L-glutamate from L-glutamate and N(2)-acetyl-L-ornithine (cyclic): step 1/1. Its pathway is amino-acid biosynthesis; L-arginine biosynthesis; N(2)-acetyl-L-ornithine from L-glutamate: step 1/4. Its function is as follows. Catalyzes two activities which are involved in the cyclic version of arginine biosynthesis: the synthesis of N-acetylglutamate from glutamate and acetyl-CoA as the acetyl donor, and of ornithine by transacetylation between N(2)-acetylornithine and glutamate. In Mycolicibacterium paratuberculosis (strain ATCC BAA-968 / K-10) (Mycobacterium paratuberculosis), this protein is Arginine biosynthesis bifunctional protein ArgJ.